Consider the following 157-residue polypeptide: ATP synthase subunit b (157 aa).

The helical transmembrane segment at 7–29 (LVSQAIAFSIFIWFTTKFVWPYL) threads the bilayer.

This sequence belongs to the ATPase B chain family. As to quaternary structure, F-type ATPases have 2 components, F(1) - the catalytic core - and F(0) - the membrane proton channel. F(1) has five subunits: alpha(3), beta(3), gamma(1), delta(1), epsilon(1). F(0) has three main subunits: a(1), b(2) and c(10-14). The alpha and beta chains form an alternating ring which encloses part of the gamma chain. F(1) is attached to F(0) by a central stalk formed by the gamma and epsilon chains, while a peripheral stalk is formed by the delta and b chains.

Its subcellular location is the cell inner membrane. Functionally, f(1)F(0) ATP synthase produces ATP from ADP in the presence of a proton or sodium gradient. F-type ATPases consist of two structural domains, F(1) containing the extramembraneous catalytic core and F(0) containing the membrane proton channel, linked together by a central stalk and a peripheral stalk. During catalysis, ATP synthesis in the catalytic domain of F(1) is coupled via a rotary mechanism of the central stalk subunits to proton translocation. In terms of biological role, component of the F(0) channel, it forms part of the peripheral stalk, linking F(1) to F(0). This Nitrosomonas eutropha (strain DSM 101675 / C91 / Nm57) protein is ATP synthase subunit b.